Reading from the N-terminus, the 365-residue chain is GTPase Obg (365 aa).

The region spanning 1 to 159 (MKFIDEARIE…RMLKLELKVL (159 aa)) is the Obg domain. The 175-residue stretch at 160–334 (ADVGLLGMPN…LVYAIKDHLA (175 aa)) folds into the OBG-type G domain. GTP is bound by residues 166–173 (GMPNAGKS), 191–195 (FTTLH), 213–216 (DIPG), 284–287 (NKLD), and 315–317 (SAL). Residues serine 173 and threonine 193 each contribute to the Mg(2+) site.

It belongs to the TRAFAC class OBG-HflX-like GTPase superfamily. OBG GTPase family. Monomer. Mg(2+) serves as cofactor.

The protein resides in the cytoplasm. In terms of biological role, an essential GTPase which binds GTP, GDP and possibly (p)ppGpp with moderate affinity, with high nucleotide exchange rates and a fairly low GTP hydrolysis rate. Plays a role in control of the cell cycle, stress response, ribosome biogenesis and in those bacteria that undergo differentiation, in morphogenesis control. The protein is GTPase Obg of Cupriavidus metallidurans (strain ATCC 43123 / DSM 2839 / NBRC 102507 / CH34) (Ralstonia metallidurans).